The chain runs to 267 residues: Transmembrane protein 106B (267 aa).

The Cytoplasmic portion of the chain corresponds to 1–92 (MGKALSHVAK…QRLRPRRTKL (92 aa)). Residues 93-113 (YVMASVILCLLLCTLAVFFLF) traverse the membrane as a helical segment. Residues 114-267 (PRSIDVNYVG…EYSLNTPLTG (154 aa)) are Lumenal-facing. 4 N-linked (GlcNAc...) asparagine glycosylation sites follow: N141, N147, N160, and N179. An intrachain disulfide couples C210 to C249. N252 carries an N-linked (GlcNAc...) asparagine glycan.

It belongs to the TMEM106 family.

Its subcellular location is the late endosome membrane. The protein localises to the lysosome membrane. It is found in the cell membrane. In terms of biological role, in neurons, involved in the transport of late endosomes/lysosomes. May be involved in dendrite morphogenesis and maintenance by regulating lysosomal trafficking. May act as a molecular brake for retrograde transport of late endosomes/lysosomes, possibly via its interaction with MAP6. In motoneurons, may mediate the axonal transport of lysosomes and axonal sorting at the initial segment. It remains unclear whether TMEM106B affects the transport of moving lysosomes in the anterograde or retrograde direction in neurites and whether it is particularly important in the sorting of lysosomes in axons or in dendrites. In neurons, may also play a role in the regulation of lysosomal size and responsiveness to stress. Required for proper lysosomal acidification. In Danio rerio (Zebrafish), this protein is Transmembrane protein 106B (tmem106b).